A 262-amino-acid polypeptide reads, in one-letter code: Phosphatidylserine decarboxylase proenzyme (262 aa).

Catalysis depends on charge relay system; for autoendoproteolytic cleavage activity residues D86, H142, and S226. The active-site Schiff-base intermediate with substrate; via pyruvic acid; for decarboxylase activity is the S226. S226 carries the pyruvic acid (Ser); by autocatalysis modification.

Belongs to the phosphatidylserine decarboxylase family. PSD-B subfamily. Prokaryotic type I sub-subfamily. As to quaternary structure, heterodimer of a large membrane-associated beta subunit and a small pyruvoyl-containing alpha subunit. Pyruvate is required as a cofactor. In terms of processing, is synthesized initially as an inactive proenzyme. Formation of the active enzyme involves a self-maturation process in which the active site pyruvoyl group is generated from an internal serine residue via an autocatalytic post-translational modification. Two non-identical subunits are generated from the proenzyme in this reaction, and the pyruvate is formed at the N-terminus of the alpha chain, which is derived from the carboxyl end of the proenzyme. The autoendoproteolytic cleavage occurs by a canonical serine protease mechanism, in which the side chain hydroxyl group of the serine supplies its oxygen atom to form the C-terminus of the beta chain, while the remainder of the serine residue undergoes an oxidative deamination to produce ammonia and the pyruvoyl prosthetic group on the alpha chain. During this reaction, the Ser that is part of the protease active site of the proenzyme becomes the pyruvoyl prosthetic group, which constitutes an essential element of the active site of the mature decarboxylase.

The protein resides in the cell membrane. The enzyme catalyses a 1,2-diacyl-sn-glycero-3-phospho-L-serine + H(+) = a 1,2-diacyl-sn-glycero-3-phosphoethanolamine + CO2. The protein operates within phospholipid metabolism; phosphatidylethanolamine biosynthesis; phosphatidylethanolamine from CDP-diacylglycerol: step 2/2. Catalyzes the formation of phosphatidylethanolamine (PtdEtn) from phosphatidylserine (PtdSer). The protein is Phosphatidylserine decarboxylase proenzyme of Bacillus thuringiensis subsp. konkukian (strain 97-27).